The following is a 362-amino-acid chain: Uracil-DNA glycosylase (362 aa).

Residues Ala28–Ala97 are disordered. The active-site Proton acceptor is the Asp205.

This sequence belongs to the uracil-DNA glycosylase (UDG) superfamily. UNG family.

It localises to the host nucleus. The enzyme catalyses Hydrolyzes single-stranded DNA or mismatched double-stranded DNA and polynucleotides, releasing free uracil.. Functionally, excises uracil residues from the DNA which can arise as a result of misincorporation of dUMP residues by DNA polymerase or deamination of cytosines. Therefore may reduce deleterious uracil incorporation into the viral genome, particularly in terminally differentiated cells which lack DNA repair enzymes. The polypeptide is Uracil-DNA glycosylase (UL2) (Psittacid herpesvirus 1 (isolate Amazon parrot/-/97-0001/1997) (PsHV-1)).